A 938-amino-acid chain; its full sequence is Isoleucine--tRNA ligase (938 aa).

Positions 58–68 (PYANGSIHIGH) match the 'HIGH' region motif. Residue lysine 183 is modified to N6-acetyllysine. Position 561 (glutamate 561) interacts with L-isoleucyl-5'-AMP. A 'KMSKS' region motif is present at residues 602–606 (KMSKS). Position 605 (lysine 605) interacts with ATP. 4 residues coordinate Zn(2+): cysteine 901, cysteine 904, cysteine 921, and cysteine 924.

The protein belongs to the class-I aminoacyl-tRNA synthetase family. IleS type 1 subfamily. In terms of assembly, monomer. The cofactor is Zn(2+).

The protein localises to the cytoplasm. The catalysed reaction is tRNA(Ile) + L-isoleucine + ATP = L-isoleucyl-tRNA(Ile) + AMP + diphosphate. Catalyzes the attachment of isoleucine to tRNA(Ile). As IleRS can inadvertently accommodate and process structurally similar amino acids such as valine, to avoid such errors it has two additional distinct tRNA(Ile)-dependent editing activities. One activity is designated as 'pretransfer' editing and involves the hydrolysis of activated Val-AMP. The other activity is designated 'posttransfer' editing and involves deacylation of mischarged Val-tRNA(Ile). The polypeptide is Isoleucine--tRNA ligase (Shigella dysenteriae serotype 1 (strain Sd197)).